Here is a 458-residue protein sequence, read N- to C-terminus: UDP-N-acetylmuramoylalanine--D-glutamate ligase (458 aa).

Glycine 124–threonine 130 serves as a coordination point for ATP.

The protein belongs to the MurCDEF family.

The protein localises to the cytoplasm. The enzyme catalyses UDP-N-acetyl-alpha-D-muramoyl-L-alanine + D-glutamate + ATP = UDP-N-acetyl-alpha-D-muramoyl-L-alanyl-D-glutamate + ADP + phosphate + H(+). It functions in the pathway cell wall biogenesis; peptidoglycan biosynthesis. Its function is as follows. Cell wall formation. Catalyzes the addition of glutamate to the nucleotide precursor UDP-N-acetylmuramoyl-L-alanine (UMA). The chain is UDP-N-acetylmuramoylalanine--D-glutamate ligase from Clostridium novyi (strain NT).